The following is a 659-amino-acid chain: Interferon-induced GTP-binding protein Mx3 (659 aa).

Residues 65 to 338 form the Dynamin-type G domain; sequence DLALPAIAVI…LISHICKSLP (274 aa). Positions 75–82 are G1 motif; sequence GDQSSGKS. 75 to 82 provides a ligand contact to GTP; sequence GDQSSGKS. A G2 motif region spans residues 100–102; sequence VTR. The interval 176 to 179 is G3 motif; the sequence is DLPG. GTP is bound by residues 176–180 and 245–248; these read DLPGI and TKPD. The G4 motif stretch occupies residues 245 to 248; it reads TKPD. The interval 277–280 is G5 motif; the sequence is KCRG. The tract at residues 547–568 is disordered; the sequence is EAEEEERKHGKSRSAQSPNLQT. Polar residues predominate over residues 559-568; that stretch reads RSAQSPNLQT. The 89-residue stretch at 571–659 folds into the GED domain; the sequence is MDEIFQHLNA…AQRRLAKFPG (89 aa).

It belongs to the TRAFAC class dynamin-like GTPase superfamily. Dynamin/Fzo/YdjA family.

The protein localises to the cytoplasm. In terms of biological role, does not show activity against influenza virus or VSV; although it only differs from Mx2 by 8 positions. The sequence is that of Interferon-induced GTP-binding protein Mx3 (Mx3) from Rattus norvegicus (Rat).